A 615-amino-acid chain; its full sequence is Ras association domain-containing protein 1 homolog (615 aa).

Disordered regions lie at residues 1–29 (MLRS…PTYQ) and 69–89 (SDDE…QSIG). Positions 76–87 (TSSTSSPQSEQS) are enriched in low complexity. The Phorbol-ester/DAG-type zinc-finger motif lies at 164 to 214 (NHSFKTHSLLHPTWCDKCGDFIWGILKEALKCEHCNYTCHARCRDLVTLDC). The disordered stretch occupies residues 249–268 (PAMSSSTGSDKENGNGNSAG). Over residues 251-268 (MSSSTGSDKENGNGNSAG) the composition is skewed to polar residues. In terms of domain architecture, Ras-associating spans 396-496 (KTTSLRTITS…RALVLQENDT (101 aa)). Positions 498–545 (DILWDAFEIPELENFLRILGMEEKQYVFQTQQKYQQYRYHLDAELRQR) constitute an SARAH domain.

As to quaternary structure, interacts with rab-39 (GTP-bound form). Interacts (via SARAH domain) with cst-1; the interaction is required for the phosphorylation of cst-1. As to expression, expressed in the pharynx, epithelial cells, ciliated neurons in the head, body wall muscles, hypodermis, vulva, gonadal sheath cells, tail hypodermis and in coelomocytes. Expressed in the pharynx, neurons and vulva.

It localises to the cytoplasm. The protein resides in the cytoskeleton. Its function is as follows. Involved in embryonic morphogenesis. Plays a role in the organization of apical filamentous actin in epithelial cells of the developing embryo. May play a role in let-60-mediated vulval development. May induce nuclear condensation. Positively regulates the oxidative stress response, and this may be in association with the small GTPase rab-39. Not required for muscle integrity. This Caenorhabditis elegans protein is Ras association domain-containing protein 1 homolog.